Consider the following 275-residue polypeptide: Elongation factor Ts (275 aa).

Residues threonine 76 to valine 79 form an involved in Mg(2+) ion dislocation from EF-Tu region.

This sequence belongs to the EF-Ts family.

The protein resides in the cytoplasm. In terms of biological role, associates with the EF-Tu.GDP complex and induces the exchange of GDP to GTP. It remains bound to the aminoacyl-tRNA.EF-Tu.GTP complex up to the GTP hydrolysis stage on the ribosome. The polypeptide is Elongation factor Ts (Corynebacterium kroppenstedtii (strain DSM 44385 / JCM 11950 / CIP 105744 / CCUG 35717)).